The primary structure comprises 305 residues: Heterogeneous nuclear ribonucleoprotein A0 (305 aa).

At M1 the chain carries N-acetylmethionine. The RRM 1 domain maps to C7 to E86. Residue S68 is modified to Phosphoserine. Residue K80 forms a Glycyl lysine isopeptide (Lys-Gly) (interchain with G-Cter in SUMO2) linkage. S84 is subject to Phosphoserine; by MAPKAPK2. Residues K96, K98, K99, and K106 each participate in a glycyl lysine isopeptide (Lys-Gly) (interchain with G-Cter in SUMO2) cross-link. Positions K98 to P175 constitute an RRM 2 domain. Position 133 is an N6-acetyllysine (K133). An Omega-N-methylarginine modification is found at R139. Glycyl lysine isopeptide (Lys-Gly) (interchain with G-Cter in SUMO2) cross-links involve residues K154, K159, K172, and K176. Disordered stretches follow at residues D178 to N211 and Q265 to F305. 2 stretches are compositionally biased toward gly residues: residues A181 to N211 and K272 to G284. R286 is subject to Omega-N-methylarginine. The segment covering Y292–F305 has biased composition (gly residues). R293 carries the post-translational modification Asymmetric dimethylarginine; alternate. R293 is modified (dimethylated arginine; alternate). At R293 the chain carries Omega-N-methylarginine; alternate.

Post-translationally, phosphorylated at Ser-84 by MAPKAPK2 in response to LPS treatment, promoting stabilization of GADD45A mRNA. In terms of processing, arg-293 is dimethylated, probably to asymmetric dimethylarginine.

The protein localises to the nucleus. In terms of biological role, mRNA-binding component of ribonucleosomes. Specifically binds AU-rich element (ARE)-containing mRNAs. Involved in post-transcriptional regulation of cytokines mRNAs. This is Heterogeneous nuclear ribonucleoprotein A0 (Hnrnpa0) from Mus musculus (Mouse).